A 188-amino-acid chain; its full sequence is dCTP deaminase (188 aa).

DCTP is bound at residue 109–114 (KSTYAR). Residue E135 is the Proton donor/acceptor of the active site. 3 residues coordinate dCTP: Q154, Y168, and Q178.

Belongs to the dCTP deaminase family. Homotrimer.

The enzyme catalyses dCTP + H2O + H(+) = dUTP + NH4(+). The protein operates within pyrimidine metabolism; dUMP biosynthesis; dUMP from dCTP (dUTP route): step 1/2. Functionally, catalyzes the deamination of dCTP to dUTP. This is dCTP deaminase from Helicobacter hepaticus (strain ATCC 51449 / 3B1).